Reading from the N-terminus, the 715-residue chain is Discoidin, CUB and LCCL domain-containing protein 1 (715 aa).

The signal sequence occupies residues 1–34; it reads MVPGARGGGALARAAGRGLLALLLAVSAPLRLQA. Topologically, residues 35-459 are extracellular; that stretch reads EELGDGCGHL…TSTGINITTV (425 aa). Intrachain disulfides connect cysteine 41/cysteine 68 and cysteine 94/cysteine 112. One can recognise a CUB domain in the interval 41-150; that stretch reads CGHLVTYQDS…RGFLLTYASS (110 aa). Asparagine 64 carries an N-linked (GlcNAc...) asparagine glycan. Asparagine 124 carries N-linked (GlcNAc...) asparagine glycosylation. The LCCL domain maps to 152–248; the sequence is HPDLITCLER…RDGSLSDKRF (97 aa). Intrachain disulfides connect cysteine 158-cysteine 174 and cysteine 178-cysteine 200. Residues 248–412 enclose the F5/8 type C domain; the sequence is FLFTSNGCSR…IALKVELIGC (165 aa). An N-linked (GlcNAc...) asparagine glycan is attached at asparagine 277. Residues 278–312 are disordered; it reads ESGDQVHWSPGQARLQDQGPSWASGDSSNNHKPRE. Over residues 295–307 the composition is skewed to polar residues; sequence QGPSWASGDSSNN. Asparagine 351, asparagine 418, and asparagine 455 each carry an N-linked (GlcNAc...) asparagine glycan. A helical membrane pass occupies residues 460-480; the sequence is AIPLVLLVVLVFAGMGIFAAF. At 481-715 the chain is on the cytoplasmic side; it reads RKKKKKGSPY…LNQTAMTALL (235 aa). Position 513 is a phosphoserine (serine 513). A Phosphothreonine modification is found at threonine 614. Residues 619-702 form a disordered region; the sequence is SGYRVPGPQP…SDSYSAPRDC (84 aa).

The protein localises to the membrane. The chain is Discoidin, CUB and LCCL domain-containing protein 1 (DCBLD1) from Homo sapiens (Human).